The sequence spans 335 residues: Fructose-1,6-bisphosphatase class 1 (335 aa).

Mg(2+) contacts are provided by glutamate 90, aspartate 113, leucine 115, and aspartate 116. Substrate is bound by residues 116 to 119 (DGSS), asparagine 209, tyrosine 242, and lysine 272. Glutamate 278 is a binding site for Mg(2+).

This sequence belongs to the FBPase class 1 family. Homotetramer. Mg(2+) is required as a cofactor.

The protein localises to the cytoplasm. It catalyses the reaction beta-D-fructose 1,6-bisphosphate + H2O = beta-D-fructose 6-phosphate + phosphate. It participates in carbohydrate biosynthesis; gluconeogenesis. This Histophilus somni (strain 2336) (Haemophilus somnus) protein is Fructose-1,6-bisphosphatase class 1.